The primary structure comprises 207 residues: Large ribosomal subunit protein uL4 (207 aa).

The tract at residues 44–77 is disordered; sequence LRQGTHKTKGRSEVRGGGRKPWRQKGTGRARQGS. A compositionally biased stretch (basic residues) spans 60-71; sequence GGRKPWRQKGTG.

Belongs to the universal ribosomal protein uL4 family. Part of the 50S ribosomal subunit.

Functionally, one of the primary rRNA binding proteins, this protein initially binds near the 5'-end of the 23S rRNA. It is important during the early stages of 50S assembly. It makes multiple contacts with different domains of the 23S rRNA in the assembled 50S subunit and ribosome. In terms of biological role, forms part of the polypeptide exit tunnel. The protein is Large ribosomal subunit protein uL4 of Shouchella clausii (strain KSM-K16) (Alkalihalobacillus clausii).